The primary structure comprises 406 residues: Indole-3-pyruvate monooxygenase YUCCA1 (406 aa).

FAD is bound at residue Gly21–Gly26. Position 184-189 (Gly184–Gly189) interacts with NADP(+).

It belongs to the FMO family. FAD serves as cofactor. In terms of tissue distribution, expressed in coleoptile tips, root tips, leaf blade tips, shoot apical meristem, vasculature of stems and flowers.

The catalysed reaction is indole-3-pyruvate + NADPH + O2 + H(+) = (indol-3-yl)acetate + CO2 + NADP(+) + H2O. Functionally, involved in auxin biosynthesis. Converts the indole-3-pyruvic acid (IPA) produced by the TAA family to indole-3-acetic acid (IAA). Functions downstream of TAR2 in auxin biosynthesis. Functions upstream of WOX11, a transcription factor that promotes the development of crown roots. The sequence is that of Indole-3-pyruvate monooxygenase YUCCA1 from Oryza sativa subsp. japonica (Rice).